The chain runs to 165 residues: Gene 59 protein (165 aa).

This Mycobacterium (Mycobacteriophage D29) protein is Gene 59 protein (59).